Reading from the N-terminus, the 356-residue chain is Peptide chain release factor 1 (356 aa).

Gln235 is modified (N5-methylglutamine).

The protein belongs to the prokaryotic/mitochondrial release factor family. In terms of processing, methylated by PrmC. Methylation increases the termination efficiency of RF1.

Its subcellular location is the cytoplasm. Functionally, peptide chain release factor 1 directs the termination of translation in response to the peptide chain termination codons UAG and UAA. In Mycobacteroides abscessus (strain ATCC 19977 / DSM 44196 / CCUG 20993 / CIP 104536 / JCM 13569 / NCTC 13031 / TMC 1543 / L948) (Mycobacterium abscessus), this protein is Peptide chain release factor 1.